The primary structure comprises 135 residues: Regulator of ribonuclease activity B (135 aa).

Residues 114–135 are disordered; the sequence is WGTYFESDEDDEEDESEDKPEA. The segment covering 119 to 135 has biased composition (acidic residues); that stretch reads ESDEDDEEDESEDKPEA.

Belongs to the RraB family. Interacts with the C-terminal region of Rne.

The protein localises to the cytoplasm. Its function is as follows. Globally modulates RNA abundance by binding to RNase E (Rne) and regulating its endonucleolytic activity. Can modulate Rne action in a substrate-dependent manner by altering the composition of the degradosome. The sequence is that of Regulator of ribonuclease activity B from Photobacterium profundum (strain SS9).